The following is a 171-amino-acid chain: S-ribosylhomocysteine lyase (171 aa).

Histidine 54, histidine 58, and cysteine 128 together coordinate Fe cation.

It belongs to the LuxS family. In terms of assembly, homodimer. Fe cation serves as cofactor.

The catalysed reaction is S-(5-deoxy-D-ribos-5-yl)-L-homocysteine = (S)-4,5-dihydroxypentane-2,3-dione + L-homocysteine. In terms of biological role, involved in the synthesis of autoinducer 2 (AI-2) which is secreted by bacteria and is used to communicate both the cell density and the metabolic potential of the environment. The regulation of gene expression in response to changes in cell density is called quorum sensing. Catalyzes the transformation of S-ribosylhomocysteine (RHC) to homocysteine (HC) and 4,5-dihydroxy-2,3-pentadione (DPD). The protein is S-ribosylhomocysteine lyase of Salmonella agona (strain SL483).